The following is a 618-amino-acid chain: DNA mismatch repair protein MutL (618 aa).

The protein belongs to the DNA mismatch repair MutL/HexB family.

Functionally, this protein is involved in the repair of mismatches in DNA. It is required for dam-dependent methyl-directed DNA mismatch repair. May act as a 'molecular matchmaker', a protein that promotes the formation of a stable complex between two or more DNA-binding proteins in an ATP-dependent manner without itself being part of a final effector complex. The chain is DNA mismatch repair protein MutL from Porphyromonas gingivalis (strain ATCC BAA-308 / W83).